Consider the following 72-residue polypeptide: uncharacterized protein (72 aa).

Positions 51–72 (AKGGRQKGEVVGVDDQCKEHKE) are disordered.

The protein belongs to the YiiE family.

This is an uncharacterized protein from Escherichia coli O157:H7.